Consider the following 180-residue polypeptide: Endoribonuclease YbeY (180 aa).

Residues His-118, His-122, and His-128 each contribute to the Zn(2+) site.

Belongs to the endoribonuclease YbeY family. The cofactor is Zn(2+).

The protein resides in the cytoplasm. Single strand-specific metallo-endoribonuclease involved in late-stage 70S ribosome quality control and in maturation of the 3' terminus of the 16S rRNA. This Rhodococcus opacus (strain B4) protein is Endoribonuclease YbeY.